The chain runs to 339 residues: Anthranilate phosphoribosyltransferase (339 aa).

5-phospho-alpha-D-ribose 1-diphosphate-binding positions include G82, 85–86, T90, 92–95, and 110–118; these read GD, NIST, and KHGNRAVSS. G82 provides a ligand contact to anthranilate. S94 serves as a coordination point for Mg(2+). 2 residues coordinate anthranilate: N113 and R168. Mg(2+) is bound by residues D227 and E228.

This sequence belongs to the anthranilate phosphoribosyltransferase family. Homodimer. The cofactor is Mg(2+).

The catalysed reaction is N-(5-phospho-beta-D-ribosyl)anthranilate + diphosphate = 5-phospho-alpha-D-ribose 1-diphosphate + anthranilate. It functions in the pathway amino-acid biosynthesis; L-tryptophan biosynthesis; L-tryptophan from chorismate: step 2/5. Its function is as follows. Catalyzes the transfer of the phosphoribosyl group of 5-phosphorylribose-1-pyrophosphate (PRPP) to anthranilate to yield N-(5'-phosphoribosyl)-anthranilate (PRA). The polypeptide is Anthranilate phosphoribosyltransferase (Clostridium beijerinckii (strain ATCC 51743 / NCIMB 8052) (Clostridium acetobutylicum)).